A 421-amino-acid polypeptide reads, in one-letter code: Cyclin-A1 (421 aa).

The disordered stretch occupies residues 1 to 20; it reads MRRHSSKSGVALPPVGQGPD.

The protein belongs to the cyclin family. Cyclin AB subfamily. As to quaternary structure, interacts with the CDK2 and the CDC2 protein kinases to form a serine/threonine kinase holoenzyme complex. The cyclin subunit imparts substrate specificity to the complex. Does not bind CDK4 and CDK5 (in vitro). The cyclin A1-CDK2 complex interacts with transcription factor E2F-1 and RB proteins. Found in a complex with CDK2, CABLES1 and CCNE1. Interacts with INCA1 and KLHDC9. Polyubiquitinated via 'Lys-11'-linked ubiquitin by the anaphase-promoting complex (APC/C), leading to its degradation by the proteasome. Deubiquitinated and stabilized by USP37 enables entry into S phase. Ubiquitinated during the G1 phase by the SCF(FBXO31) complex, leading to its proteasomal degradation.

The protein localises to the nucleus. Its function is as follows. May be involved in the control of the cell cycle at the G1/S (start) and G2/M (mitosis) transitions. May primarily function in the control of the germline meiotic cell cycle and additionally in the control of mitotic cell cycle in some somatic cells. This chain is Cyclin-A1 (Ccna1), found in Rattus norvegicus (Rat).